We begin with the raw amino-acid sequence, 290 residues long: 33 kDa chaperonin (290 aa).

2 disulfide bridges follow: cysteine 235-cysteine 237 and cysteine 268-cysteine 271.

Belongs to the HSP33 family. Under oxidizing conditions two disulfide bonds are formed involving the reactive cysteines. Under reducing conditions zinc is bound to the reactive cysteines and the protein is inactive.

Its subcellular location is the cytoplasm. Its function is as follows. Redox regulated molecular chaperone. Protects both thermally unfolding and oxidatively damaged proteins from irreversible aggregation. Plays an important role in the bacterial defense system toward oxidative stress. The protein is 33 kDa chaperonin of Streptococcus pyogenes serotype M3 (strain ATCC BAA-595 / MGAS315).